A 159-amino-acid chain; its full sequence is Ribosomal RNA large subunit methyltransferase H (159 aa).

S-adenosyl-L-methionine-binding residues include Leu-76 and Gly-108.

Belongs to the RNA methyltransferase RlmH family. In terms of assembly, homodimer.

Its subcellular location is the cytoplasm. It carries out the reaction pseudouridine(1915) in 23S rRNA + S-adenosyl-L-methionine = N(3)-methylpseudouridine(1915) in 23S rRNA + S-adenosyl-L-homocysteine + H(+). Its function is as follows. Specifically methylates the pseudouridine at position 1915 (m3Psi1915) in 23S rRNA. The sequence is that of Ribosomal RNA large subunit methyltransferase H from Ligilactobacillus salivarius (strain UCC118) (Lactobacillus salivarius).